A 212-amino-acid polypeptide reads, in one-letter code: Ribosomal RNA small subunit methyltransferase G (212 aa).

S-adenosyl-L-methionine-binding positions include Gly-80, Leu-85, 131–132 (AE), and Arg-146.

The protein belongs to the methyltransferase superfamily. RNA methyltransferase RsmG family.

It is found in the cytoplasm. The catalysed reaction is guanosine(527) in 16S rRNA + S-adenosyl-L-methionine = N(7)-methylguanosine(527) in 16S rRNA + S-adenosyl-L-homocysteine. Specifically methylates the N7 position of guanine in position 527 of 16S rRNA. The protein is Ribosomal RNA small subunit methyltransferase G of Xylella fastidiosa (strain 9a5c).